The following is a 426-amino-acid chain: Dynein regulatory complex protein 10 (426 aa).

2 disordered regions span residues T18–L37 and S399–K426. The IQ domain maps to M377 to G406. Over residues S399 to A408 the composition is skewed to basic residues. Residues K409–K426 show a composition bias toward basic and acidic residues.

Belongs to the DRC10 family. Component of the nexin-dynein regulatory complex (N-DRC). Interacts with CFAP52.

It localises to the cytoplasm. The protein resides in the cytoskeleton. It is found in the flagellum axoneme. In terms of biological role, component of the nexin-dynein regulatory complex (N-DRC), a key regulator of ciliary/flagellar motility which maintains the alignment and integrity of the distal axoneme and regulates microtubule sliding in motile axonemes. The polypeptide is Dynein regulatory complex protein 10 (IQCD) (Macaca fascicularis (Crab-eating macaque)).